The chain runs to 176 residues: Ribosome maturation factor RimM (176 aa).

Residues 96–176 form the PRC barrel domain; that stretch reads PEDEFYWRDL…QILVDWDPDF (81 aa).

This sequence belongs to the RimM family. As to quaternary structure, binds ribosomal protein uS19.

The protein resides in the cytoplasm. An accessory protein needed during the final step in the assembly of 30S ribosomal subunit, possibly for assembly of the head region. Essential for efficient processing of 16S rRNA. May be needed both before and after RbfA during the maturation of 16S rRNA. It has affinity for free ribosomal 30S subunits but not for 70S ribosomes. The sequence is that of Ribosome maturation factor RimM from Shewanella woodyi (strain ATCC 51908 / MS32).